We begin with the raw amino-acid sequence, 242 residues long: Zinc import ATP-binding protein ZnuC (242 aa).

The ABC transporter domain maps to 24–241 (INVKDLSFAY…EKFLKMFSSY (218 aa)). 56–63 (GPNGGGKT) provides a ligand contact to ATP.

This sequence belongs to the ABC transporter superfamily. Zinc importer (TC 3.A.1.15.5) family. The complex is composed of two ATP-binding proteins (ZnuC), two transmembrane proteins (ZnuB) and a solute-binding protein (ZnuA).

The protein localises to the cell inner membrane. It carries out the reaction Zn(2+)(out) + ATP(in) + H2O(in) = Zn(2+)(in) + ADP(in) + phosphate(in) + H(+)(in). In terms of biological role, part of the ABC transporter complex ZnuABC involved in zinc import. Responsible for energy coupling to the transport system. The polypeptide is Zinc import ATP-binding protein ZnuC (Ehrlichia ruminantium (strain Gardel)).